Reading from the N-terminus, the 465-residue chain is Cytochrome P450 85A1 (465 aa).

Residues 2–22 (GAMMVMMGLLLIIVSLCSALL) form a helical membrane-spanning segment. Cys-415 is a heme binding site.

Belongs to the cytochrome P450 family. It depends on heme as a cofactor. As to expression, mainly expressed in apical shoots, hypocotyls, siliques and roots. Also present in the female gametophyte.

It is found in the membrane. It carries out the reaction 6-deoxoteasterone + reduced [NADPH--hemoprotein reductase] + O2 = 6alpha-hydroxyteasterone + oxidized [NADPH--hemoprotein reductase] + H2O + H(+). It catalyses the reaction 6alpha-hydroxytyphasterol + reduced [NADPH--hemoprotein reductase] + O2 = teasterone + oxidized [NADPH--hemoprotein reductase] + 2 H2O + H(+). The enzyme catalyses 3-dehydro-6-deoxoteasterone + reduced [NADPH--hemoprotein reductase] + O2 = 3-dehydro-6alpha-hydroxyteasterone + oxidized [NADPH--hemoprotein reductase] + H2O + H(+). The catalysed reaction is 3-dehydro-6alpha-hydroxyteasterone + reduced [NADPH--hemoprotein reductase] + O2 = 3-dehydroteasterone + oxidized [NADPH--hemoprotein reductase] + 2 H2O + H(+). It carries out the reaction 6-deoxotyphasterol + reduced [NADPH--hemoprotein reductase] + O2 = 6alpha-hydroxytyphasterol + oxidized [NADPH--hemoprotein reductase] + H2O + H(+). It catalyses the reaction 6alpha-hydroxytyphasterol + reduced [NADPH--hemoprotein reductase] + O2 = typhasterol + oxidized [NADPH--hemoprotein reductase] + 2 H2O + H(+). The enzyme catalyses 6-deoxocastasterone + reduced [NADPH--hemoprotein reductase] + O2 = 6alpha-hydroxycastasterone + oxidized [NADPH--hemoprotein reductase] + H2O + H(+). The catalysed reaction is 6alpha-hydroxycastasterone + reduced [NADPH--hemoprotein reductase] + O2 = castasterone + oxidized [NADPH--hemoprotein reductase] + 2 H2O + H(+). It carries out the reaction 6-deoxocastasterone + 2 reduced [NADPH--hemoprotein reductase] + 2 O2 = castasterone + 2 oxidized [NADPH--hemoprotein reductase] + 3 H2O + 2 H(+). It catalyses the reaction 6-deoxoteasterone + 2 reduced [NADPH--hemoprotein reductase] + 2 O2 = teasterone + 2 oxidized [NADPH--hemoprotein reductase] + 3 H2O + 2 H(+). The enzyme catalyses 6-deoxotyphasterol + 2 reduced [NADPH--hemoprotein reductase] + 2 O2 = typhasterol + 2 oxidized [NADPH--hemoprotein reductase] + 3 H2O + 2 H(+). The catalysed reaction is 3-dehydro-6-deoxoteasterone + 2 reduced [NADPH--hemoprotein reductase] + 2 O2 = 3-dehydroteasterone + 2 oxidized [NADPH--hemoprotein reductase] + 3 H2O + 2 H(+). Its pathway is plant hormone biosynthesis; brassinosteroid biosynthesis. In terms of biological role, catalyzes the C6-oxidation step in brassinosteroids biosynthesis. Converts 6-deoxocastasterone (6-deoxoCS) to castasterone (CS). May also convert 6-deoxoteasterone (6-deoxoTE) to teasterone (TE), 3-dehydro-6-deoxoteasterone (6-deoxo3DT, 6-deoxo-3-DHT) to 3-dehydroteasterone (3DT, 3-DHT), and 6-deoxotyphasterol (6-deoxoTY) to typhasterol (TY). Required for the initiation of female gametogenesis (megagametogenesis). The chain is Cytochrome P450 85A1 from Arabidopsis thaliana (Mouse-ear cress).